The following is a 338-amino-acid chain: Solute carrier family 35 member G5 (338 aa).

Positions 1-21 (MAGSHPYFNLPDSTHPSPPSA) are disordered. 9 helical membrane passes run 37–57 (TNGL…VGPL), 67–87 (LPSL…ALPL), 105–125 (CFCA…VQVV), 160–180 (CGLL…LWTL), 190–210 (ALGY…LLVY), 221–241 (TVAF…LFVL), 250–270 (LLSW…FTCV), 281–301 (LVCA…YYVL), and 305–325 (VAPS…IITA). Positions 49-174 (LPAGFVGPLS…SILGLIIIVG (126 aa)) constitute an EamA 1 domain. Positions 272–325 (YAVTKAHPALVCAVLHSEVVVALILQYYVLHETVAPSDIMGAGIVLGSIAIITA) constitute an EamA 2 domain.

The protein belongs to the SLC35G solute transporter family.

It localises to the membrane. This is Solute carrier family 35 member G5 (SLC35G5) from Pan troglodytes (Chimpanzee).